The following is a 361-amino-acid chain: Outer membrane protein P2 (361 aa).

The first 20 residues, 1–20 (MKKTLAALIVGAFAASAANA), serve as a signal peptide directing secretion.

The protein belongs to the Gram-negative porin family. As to quaternary structure, homotrimer.

It is found in the cell outer membrane. Its function is as follows. Forms pores that allow passive diffusion of small molecules across the outer membrane. The polypeptide is Outer membrane protein P2 (ompP2) (Haemophilus influenzae).